Consider the following 756-residue polypeptide: Pro-neuregulin-2, membrane-bound isoform (756 aa).

The propeptide occupies 1 to 19; it reads MRRDPAPGFSMLLFGVSLA. At 20–315 the chain is on the extracellular side; the sequence is CYSPSLKSVQ…KEAEELYQKR (296 aa). 3 N-linked (GlcNAc...) asparagine glycosylation sites follow: N55, N186, and N254. The region spanning 145–240 is the Ig-like C2-type domain; the sequence is PKLKKMKSQT…RGRLHVNSVS (96 aa). 4 disulfides stabilise this stretch: C165–C219, C253–C267, C261–C278, and C280–C289. The EGF-like domain occupies 249-290; sequence HARKCNETAKSYCVNGGVCYYIEGINQLSCKCPVGYTGDRCQ. N296 is a glycosylation site (N-linked (GlcNAc...) asparagine). Residues 316 to 336 form a helical membrane-spanning segment; the sequence is VLTITGICVALLVVGIVCVVA. Residues 337–756 lie on the Cytoplasmic side of the membrane; it reads YCKTKKQRRQ…TRAKQDSGPL (420 aa). Disordered regions lie at residues 402–439, 557–578, 608–694, and 711–756; these read TFSG…SESL, LLRH…DMQR, ASPF…DGAL, and LRSD…SGPL. The segment covering 404 to 416 has biased composition (low complexity); the sequence is SGSHSCSPSHHCS. The span at 424-437 shows a compositional bias: basic and acidic residues; the sequence is HRHESHTWSLERSE. A compositionally biased stretch (low complexity) spans 654 to 682; that stretch reads LNGLAAQRARAARDSLSLSSGSGCGSASA.

The protein belongs to the neuregulin family. In terms of assembly, interacts with ERBB3 and ERBB4. Post-translationally, proteolytic cleavage close to the plasma membrane on the external face leads to the release of the soluble growth factor form. In terms of processing, extensive glycosylation precedes the proteolytic cleavage. In terms of tissue distribution, highest expression in the brain, with lower levels in the lung. In the cerebellum, found in granule and Purkinje cells.

Its subcellular location is the cell membrane. It localises to the secreted. In terms of biological role, direct ligand for ERBB3 and ERBB4 tyrosine kinase receptors. Concomitantly recruits ERBB1 and ERBB2 coreceptors, resulting in ligand-stimulated tyrosine phosphorylation and activation of the ERBB receptors. May also promote the heterodimerization with the EGF receptor. This Mus musculus (Mouse) protein is Pro-neuregulin-2, membrane-bound isoform (Nrg2).